A 440-amino-acid polypeptide reads, in one-letter code: Damage-control phosphatase ARMT1 (440 aa).

Mn(2+)-binding residues include Asp-252 and Asn-253. Residue 252-253 coordinates substrate; it reads DN. Positions 257 and 290 each coordinate S-adenosyl-L-methionine. Asp-290 contacts Mn(2+). Substrate contacts are provided by residues 366-370 and Lys-403; that span reads DLNYR. The Subfamily III RTxK motif signature appears at 400 to 403; sequence RTLK.

Belongs to the damage-control phosphatase family. Sugar phosphate phosphatase III subfamily. It depends on Mn(2+) as a cofactor. The cofactor is Ni(2+). Automethylated.

It carries out the reaction beta-D-fructose 1-phosphate + H2O = D-fructose + phosphate. It catalyses the reaction beta-D-fructose 6-phosphate = dihydroxyacetone + D-glyceraldehyde 3-phosphate. The catalysed reaction is L-glutamyl-[protein] + S-adenosyl-L-methionine = [protein]-L-glutamate 5-O-methyl ester + S-adenosyl-L-homocysteine. Metal-dependent phosphatase that shows phosphatase activity against several substrates, including fructose-1-phosphate and fructose-6-phosphate. Its preference for fructose-1-phosphate, a strong glycating agent that causes DNA damage rather than a canonical yeast metabolite, suggests a damage-control function in hexose phosphate metabolism. Has also been shown to have O-methyltransferase activity that methylates glutamate residues of target proteins to form gamma-glutamyl methyl ester residues. Possibly methylates PCNA, suggesting it is involved in the DNA damage response. This is Damage-control phosphatase ARMT1 from Xenopus tropicalis (Western clawed frog).